The following is an 89-amino-acid chain: HssA/B-like protein 10 (89 aa).

It belongs to the hssA/B family.

This is HssA/B-like protein 10 (hssl10) from Dictyostelium discoideum (Social amoeba).